The following is a 434-amino-acid chain: ATP-dependent protease ATPase subunit HslU (434 aa).

Residues Val18, 60–65 (GVGKTE), Asp247, Glu312, and Arg384 contribute to the ATP site.

This sequence belongs to the ClpX chaperone family. HslU subfamily. In terms of assembly, a double ring-shaped homohexamer of HslV is capped on each side by a ring-shaped HslU homohexamer. The assembly of the HslU/HslV complex is dependent on binding of ATP.

Its subcellular location is the cytoplasm. In terms of biological role, ATPase subunit of a proteasome-like degradation complex; this subunit has chaperone activity. The binding of ATP and its subsequent hydrolysis by HslU are essential for unfolding of protein substrates subsequently hydrolyzed by HslV. HslU recognizes the N-terminal part of its protein substrates and unfolds these before they are guided to HslV for hydrolysis. In Phenylobacterium zucineum (strain HLK1), this protein is ATP-dependent protease ATPase subunit HslU.